The following is a 293-amino-acid chain: Pyridoxal 5'-phosphate synthase subunit PdxS (293 aa).

A D-ribose 5-phosphate-binding site is contributed by Asp23. Lys80 (schiff-base intermediate with D-ribose 5-phosphate) is an active-site residue. Gly152 is a binding site for D-ribose 5-phosphate. Arg164 is a binding site for D-glyceraldehyde 3-phosphate. D-ribose 5-phosphate-binding positions include Gly213 and 234–235; that span reads GS.

Belongs to the PdxS/SNZ family. In the presence of PdxT, forms a dodecamer of heterodimers.

It catalyses the reaction aldehydo-D-ribose 5-phosphate + D-glyceraldehyde 3-phosphate + L-glutamine = pyridoxal 5'-phosphate + L-glutamate + phosphate + 3 H2O + H(+). It functions in the pathway cofactor biosynthesis; pyridoxal 5'-phosphate biosynthesis. In terms of biological role, catalyzes the formation of pyridoxal 5'-phosphate from ribose 5-phosphate (RBP), glyceraldehyde 3-phosphate (G3P) and ammonia. The ammonia is provided by the PdxT subunit. Can also use ribulose 5-phosphate and dihydroxyacetone phosphate as substrates, resulting from enzyme-catalyzed isomerization of RBP and G3P, respectively. The polypeptide is Pyridoxal 5'-phosphate synthase subunit PdxS (Thermus thermophilus (strain ATCC BAA-163 / DSM 7039 / HB27)).